The sequence spans 164 residues: Ribonuclease H (164 aa).

The RNase H type-1 domain occupies 9-150; it reads DMPRVTIYTD…ADTLANAATD (142 aa). Mg(2+) contacts are provided by D18, E56, D78, and D142.

It belongs to the RNase H family. Monomer. Mg(2+) serves as cofactor.

The protein localises to the cytoplasm. It carries out the reaction Endonucleolytic cleavage to 5'-phosphomonoester.. In terms of biological role, endonuclease that specifically degrades the RNA of RNA-DNA hybrids. The sequence is that of Ribonuclease H from Chromohalobacter salexigens (strain ATCC BAA-138 / DSM 3043 / CIP 106854 / NCIMB 13768 / 1H11).